We begin with the raw amino-acid sequence, 354 residues long: DNA integrity scanning protein DisA (354 aa).

The 139-residue stretch at 6–144 (GMKIKDTLKI…GDIKYVLRDS (139 aa)) folds into the DAC domain. ATP is bound by residues G73, L91, and 104-108 (TRHRT).

This sequence belongs to the DisA family. In terms of assembly, homooctamer. The cofactor is Mg(2+).

The enzyme catalyses 2 ATP = 3',3'-c-di-AMP + 2 diphosphate. In terms of biological role, participates in a DNA-damage check-point that is active prior to asymmetric division when DNA is damaged. DisA forms globular foci that rapidly scan along the chromosomes during sporulation, searching for lesions. When a lesion is present, DisA pauses at the lesion site. This triggers a cellular response that culminates in a temporary block in sporulation initiation. Its function is as follows. Also has diadenylate cyclase activity, catalyzing the condensation of 2 ATP molecules into cyclic di-AMP (c-di-AMP). c-di-AMP acts as a signaling molecule that couples DNA integrity with progression of sporulation. The rise in c-di-AMP level generated by DisA while scanning the chromosome, operates as a positive signal that advances sporulation; upon encountering a lesion, the DisA focus arrests at the damaged site and halts c-di-AMP synthesis. The chain is DNA integrity scanning protein DisA from Clostridium botulinum (strain Alaska E43 / Type E3).